We begin with the raw amino-acid sequence, 1029 residues long: uncharacterized protein (1029 aa).

The segment covering 1–23 has biased composition (basic and acidic residues); it reads MREWCMLRESRTNTPRRAAERGK. Residues 1-31 are disordered; the sequence is MREWCMLRESRTNTPRRAAERGKRPGGSSVR. Residues 39–168 form the Guanylate cyclase domain; that stretch reads TALCYDLVGS…AALAMAARLQ (130 aa). Position 261–268 (261–268) interacts with ATP; sequence GDAGIGKS.

This is an uncharacterized protein from Rhizobium meliloti (strain 1021) (Ensifer meliloti).